Consider the following 354-residue polypeptide: Ferrochelatase (354 aa).

Residues His-214 and Glu-295 each coordinate Fe cation.

Belongs to the ferrochelatase family.

It is found in the cytoplasm. The enzyme catalyses heme b + 2 H(+) = protoporphyrin IX + Fe(2+). It functions in the pathway porphyrin-containing compound metabolism; protoheme biosynthesis; protoheme from protoporphyrin-IX: step 1/1. Its function is as follows. Catalyzes the ferrous insertion into protoporphyrin IX. The chain is Ferrochelatase from Burkholderia vietnamiensis (strain G4 / LMG 22486) (Burkholderia cepacia (strain R1808)).